A 307-amino-acid chain; its full sequence is UDP-3-O-acyl-N-acetylglucosamine deacetylase (307 aa).

Positions 80, 239, and 243 each coordinate Zn(2+). H266 serves as the catalytic Proton donor.

The protein belongs to the LpxC family. Requires Zn(2+) as cofactor.

It catalyses the reaction a UDP-3-O-[(3R)-3-hydroxyacyl]-N-acetyl-alpha-D-glucosamine + H2O = a UDP-3-O-[(3R)-3-hydroxyacyl]-alpha-D-glucosamine + acetate. It participates in glycolipid biosynthesis; lipid IV(A) biosynthesis; lipid IV(A) from (3R)-3-hydroxytetradecanoyl-[acyl-carrier-protein] and UDP-N-acetyl-alpha-D-glucosamine: step 2/6. In terms of biological role, catalyzes the hydrolysis of UDP-3-O-myristoyl-N-acetylglucosamine to form UDP-3-O-myristoylglucosamine and acetate, the committed step in lipid A biosynthesis. This chain is UDP-3-O-acyl-N-acetylglucosamine deacetylase, found in Neisseria meningitidis serogroup C / serotype 2a (strain ATCC 700532 / DSM 15464 / FAM18).